Here is a 378-residue protein sequence, read N- to C-terminus: Probable portal protein (378 aa).

It belongs to the skunalikevirus portal protein family. In terms of assembly, homododecamer.

Its subcellular location is the virion. Functionally, forms the portal vertex of the capsid. This portal plays critical roles in head assembly, genome packaging, neck/tail attachment, and genome ejection. The portal protein multimerizes as a single ring-shaped homododecamer arranged around a central channel. Binds to the terminase subunits to form the packaging machine. Necessary to ensure correct procapsid size during capsid assembly. Once the capsid is packaged with the DNA, the terminase complex is substituted by the connector proteins gp15. This is Probable portal protein from Lactococcus phage p2 (Lactococcus lactis bacteriophage p2).